The sequence spans 68 residues: Molybdenum-pterin-binding protein 3 (68 aa).

The Mop domain occupies 2 to 68; that stretch reads SISARNQLKG…IKSTDVMILA (67 aa).

Its function is as follows. Binds one mole of molybdenum per mole of protein and contains a pterin. The polypeptide is Molybdenum-pterin-binding protein 3 (mopIII) (Clostridium pasteurianum).